Reading from the N-terminus, the 363-residue chain is MVKVGVNGFGRIGRLVTRAAFNSGKVDIVAINDPFIDLNYMVYMFKYDSTHGKFKVDIVAINDPFIDLNYMVYMFKYDSTHGKFKGTVKAENGKLVINGHAITIFQERDPSKIKWGDAGAEYVVESTGVFTTMEKAGAHLKGGAKRVIISAPSRDAPMFVMGVNHEKYDKSLKIVSNASCTTNCLAPLAKVIHDNFGIVEGLMTTVHAITATQKTVDGPSAKLWRDGAGAAQNIIPASTGAAKAVGKVIPELNGKLTGMAFRVPTANVSVVDLTCRLEKPAKYDDIKRVVKQACDGPLKGMLGYTEHQVVSSDFNGDSHSSTFDAGAGIALNDHFVKLVSWYDNEFGYSNRVVDLMVHMASKE.

The interaction with WARS stretch occupies residues 1–176 (MVKVGVNGFG…KYDKSLKIVS (176 aa)). Lysine 3 bears the N6,N6-dimethyllysine mark. At asparagine 7 the chain carries Deamidated asparagine. Residues 11–12 (RI) and aspartate 33 contribute to the NAD(+) site. Tyrosine 70 bears the Phosphotyrosine mark. Lysine 89 is modified (N6-acetyllysine). Residue asparagine 92 is modified to Deamidated asparagine. Lysine 94 is subject to N6,N6-dimethyllysine. Asparagine 98 is subject to Deamidated asparagine. Threonine 103 is modified (phosphothreonine). The NAD(+) site is built by arginine 108 and serine 150. A phosphoserine mark is found at serine 150 and serine 176. The residue at position 177 (asparagine 177) is a Deamidated asparagine. Serine 179 bears the Phosphoserine mark. D-glyceraldehyde 3-phosphate is bound at residue 179 to 181 (SCT). Cysteine 180 acts as the Nucleophile in catalysis. The residue at position 180 (cysteine 180) is an ADP-ribosylcysteine; by autocatalysis; in irreversibly inhibited form. Cysteine persulfide is present on cysteine 180. Cysteine 180 is subject to S-(2-succinyl)cysteine. Cysteine 180 is subject to S-nitrosocysteine; in reversibly inhibited form. Phosphothreonine is present on threonine 181. Asparagine 183 is modified (deamidated asparagine). Phosphothreonine occurs at positions 205, 210, and 212. Threonine 210 is a D-glyceraldehyde 3-phosphate binding site. Lysine 214 participates in a covalent cross-link: Glycyl lysine isopeptide (Lys-Gly) (interchain with G-Cter in SUMO2). Position 222 is an N6,N6-dimethyllysine; alternate (lysine 222). An N6-acetyllysine; alternate modification is found at lysine 222. At lysine 222 the chain carries N6-malonyllysine; alternate. At threonine 239 the chain carries Phosphothreonine. 239–240 (TG) is a binding site for D-glyceraldehyde 3-phosphate. Lysine 243 carries the post-translational modification N6,N6-dimethyllysine; alternate. Lysine 243 is subject to N6-malonyllysine; alternate. Residue lysine 247 is modified to N6-acetyllysine. At asparagine 253 the chain carries Deamidated asparagine. Residue lysine 255 is modified to N6,N6-dimethyllysine; alternate. N6-acetyllysine; alternate is present on lysine 255. Threonine 257 bears the Phosphothreonine mark. D-glyceraldehyde 3-phosphate is bound at residue arginine 262. Threonine 265 is modified (phosphothreonine). A Phosphoserine modification is found at serine 269. Cysteine 275 carries the post-translational modification S-(2-succinyl)cysteine. Position 275 is an S-nitrosocysteine (cysteine 275). Lysine 282 is subject to N6-acetyllysine. Residue lysine 291 is modified to N6,N6-dimethyllysine. Serine 340 carries the phosphoserine modification. Asparagine 344 carries the post-translational modification Deamidated asparagine. Asparagine 344 lines the NAD(+) pocket. Serine 361 is modified (phosphoserine). Lysine 362 bears the N6,N6-dimethyllysine mark.

Belongs to the glyceraldehyde-3-phosphate dehydrogenase family. Homotetramer. Interacts with TPPP; the interaction is direct. Interacts (when S-nitrosylated) with SIAH1; leading to nuclear translocation. Interacts with RILPL1/GOSPEL, leading to prevent the interaction between GAPDH and SIAH1 and prevent nuclear translocation. Interacts with CHP1; the interaction increases the binding of CHP1 with microtubules. Associates with microtubules. Interacts with EIF1AD, USP25, PRKCI and WARS1. Interacts with phosphorylated RPL13A; inhibited by oxidatively-modified low-densitity lipoprotein (LDL(ox)). Component of the GAIT complex. Interacts with FKBP6; leading to inhibit GAPDH catalytic activity. Interacts with TRAF2, promoting TRAF2 ubiquitination. Interacts with TRAF3, promoting TRAF3 ubiquitination. ISGylated. Post-translationally, S-nitrosylation of Cys-180 leads to interaction with SIAH1, followed by translocation to the nucleus S-nitrosylation of Cys-275 is induced by interferon-gamma and LDL(ox) implicating the iNOS-S100A8/9 transnitrosylase complex and seems to prevent interaction with phosphorylated RPL13A and to interfere with GAIT complex activity. In terms of processing, sulfhydration at Cys-180 increases catalytic activity.

It is found in the cytoplasm. The protein localises to the cytosol. It localises to the cytoskeleton. Its subcellular location is the nucleus. It carries out the reaction D-glyceraldehyde 3-phosphate + phosphate + NAD(+) = (2R)-3-phospho-glyceroyl phosphate + NADH + H(+). It catalyses the reaction S-nitroso-L-cysteinyl-[GAPDH] + L-cysteinyl-[protein] = L-cysteinyl-[GAPDH] + S-nitroso-L-cysteinyl-[protein]. It functions in the pathway carbohydrate degradation; glycolysis; pyruvate from D-glyceraldehyde 3-phosphate: step 1/5. Its activity is regulated as follows. Glyceraldehyde-3-phosphate dehydrogenase activity is inhibited by fumarate, via the formation of S-(2-succinyl)cysteine residues. Has both glyceraldehyde-3-phosphate dehydrogenase and nitrosylase activities, thereby playing a role in glycolysis and nuclear functions, respectively. Glyceraldehyde-3-phosphate dehydrogenase is a key enzyme in glycolysis that catalyzes the first step of the pathway by converting D-glyceraldehyde 3-phosphate (G3P) into 3-phospho-D-glyceroyl phosphate. Modulates the organization and assembly of the cytoskeleton. Facilitates the CHP1-dependent microtubule and membrane associations through its ability to stimulate the binding of CHP1 to microtubules. Component of the GAIT (gamma interferon-activated inhibitor of translation) complex which mediates interferon-gamma-induced transcript-selective translation inhibition in inflammation processes. Upon interferon-gamma treatment assembles into the GAIT complex which binds to stem loop-containing GAIT elements in the 3'-UTR of diverse inflammatory mRNAs (such as ceruplasmin) and suppresses their translation. Also plays a role in innate immunity by promoting TNF-induced NF-kappa-B activation and type I interferon production, via interaction with TRAF2 and TRAF3, respectively. Participates in nuclear events including transcription, RNA transport, DNA replication and apoptosis. Nuclear functions are probably due to the nitrosylase activity that mediates cysteine S-nitrosylation of nuclear target proteins such as SIRT1, HDAC2 and PRKDC. The protein is Glyceraldehyde-3-phosphate dehydrogenase, muscle of Jaculus orientalis (Greater Egyptian jerboa).